The chain runs to 378 residues: Putative glutamate--cysteine ligase 2 (378 aa).

It belongs to the glutamate--cysteine ligase type 2 family. YbdK subfamily.

It carries out the reaction L-cysteine + L-glutamate + ATP = gamma-L-glutamyl-L-cysteine + ADP + phosphate + H(+). ATP-dependent carboxylate-amine ligase which exhibits weak glutamate--cysteine ligase activity. This Ectopseudomonas mendocina (strain ymp) (Pseudomonas mendocina) protein is Putative glutamate--cysteine ligase 2.